A 227-amino-acid polypeptide reads, in one-letter code: 7-cyano-7-deazaguanine synthase (227 aa).

ATP is bound at residue 9–19 (LSGGLDSATVL). Zn(2+)-binding residues include cysteine 189, cysteine 199, cysteine 202, and cysteine 205.

This sequence belongs to the QueC family. It depends on Zn(2+) as a cofactor.

The enzyme catalyses 7-carboxy-7-deazaguanine + NH4(+) + ATP = 7-cyano-7-deazaguanine + ADP + phosphate + H2O + H(+). The protein operates within purine metabolism; 7-cyano-7-deazaguanine biosynthesis. Functionally, catalyzes the ATP-dependent conversion of 7-carboxy-7-deazaguanine (CDG) to 7-cyano-7-deazaguanine (preQ(0)). The chain is 7-cyano-7-deazaguanine synthase from Cupriavidus necator (strain ATCC 17699 / DSM 428 / KCTC 22496 / NCIMB 10442 / H16 / Stanier 337) (Ralstonia eutropha).